The primary structure comprises 460 residues: Ribosomal protein uS12 methylthiotransferase RimO (460 aa).

The region spanning 9-119 (PKVGFVSLGC…VMEAVHAALP (111 aa)) is the MTTase N-terminal domain. [4Fe-4S] cluster-binding residues include Cys18, Cys54, Cys83, Cys150, Cys154, and Cys157. The region spanning 136 to 374 (LTPRHYAYLK…AKQAEISALR (239 aa)) is the Radical SAM core domain. In terms of domain architecture, TRAM spans 376-444 (EAKIGSVQQC…EHDLFGDALP (69 aa)).

It belongs to the methylthiotransferase family. RimO subfamily. [4Fe-4S] cluster is required as a cofactor.

It is found in the cytoplasm. The catalysed reaction is L-aspartate(89)-[ribosomal protein uS12]-hydrogen + (sulfur carrier)-SH + AH2 + 2 S-adenosyl-L-methionine = 3-methylsulfanyl-L-aspartate(89)-[ribosomal protein uS12]-hydrogen + (sulfur carrier)-H + 5'-deoxyadenosine + L-methionine + A + S-adenosyl-L-homocysteine + 2 H(+). Catalyzes the methylthiolation of an aspartic acid residue of ribosomal protein uS12. This chain is Ribosomal protein uS12 methylthiotransferase RimO, found in Xanthomonas oryzae pv. oryzae (strain PXO99A).